The chain runs to 206 residues: Ribosomal RNA large subunit methyltransferase E (206 aa).

Glycine 61, tryptophan 63, aspartate 81, aspartate 97, and aspartate 122 together coordinate S-adenosyl-L-methionine. The active-site Proton acceptor is lysine 162.

It belongs to the class I-like SAM-binding methyltransferase superfamily. RNA methyltransferase RlmE family.

Its subcellular location is the cytoplasm. The catalysed reaction is uridine(2552) in 23S rRNA + S-adenosyl-L-methionine = 2'-O-methyluridine(2552) in 23S rRNA + S-adenosyl-L-homocysteine + H(+). Its function is as follows. Specifically methylates the uridine in position 2552 of 23S rRNA at the 2'-O position of the ribose in the fully assembled 50S ribosomal subunit. This is Ribosomal RNA large subunit methyltransferase E from Neisseria gonorrhoeae (strain ATCC 700825 / FA 1090).